Here is a 243-residue protein sequence, read N- to C-terminus: Ribonuclease PH (243 aa).

Phosphate is bound by residues arginine 91 and 129 to 131; that span reads GTR.

This sequence belongs to the RNase PH family. As to quaternary structure, homohexameric ring arranged as a trimer of dimers.

It carries out the reaction tRNA(n+1) + phosphate = tRNA(n) + a ribonucleoside 5'-diphosphate. Its function is as follows. Phosphorolytic 3'-5' exoribonuclease that plays an important role in tRNA 3'-end maturation. Removes nucleotide residues following the 3'-CCA terminus of tRNAs; can also add nucleotides to the ends of RNA molecules by using nucleoside diphosphates as substrates, but this may not be physiologically important. Probably plays a role in initiation of 16S rRNA degradation (leading to ribosome degradation) during starvation. This Burkholderia mallei (strain NCTC 10247) protein is Ribonuclease PH.